A 113-amino-acid polypeptide reads, in one-letter code: UPF0212 protein AF_0282 (113 aa).

The protein belongs to the UPF0212 family.

This chain is UPF0212 protein AF_0282, found in Archaeoglobus fulgidus (strain ATCC 49558 / DSM 4304 / JCM 9628 / NBRC 100126 / VC-16).